The chain runs to 473 residues: Tryptophanase (473 aa).

Residue K270 is modified to N6-(pyridoxal phosphate)lysine.

Belongs to the beta-eliminating lyase family. In terms of assembly, homotetramer. Pyridoxal 5'-phosphate is required as a cofactor.

The catalysed reaction is L-tryptophan + H2O = indole + pyruvate + NH4(+). It participates in amino-acid degradation; L-tryptophan degradation via pyruvate pathway; indole and pyruvate from L-tryptophan: step 1/1. This Vibrio vulnificus (strain CMCP6) protein is Tryptophanase.